We begin with the raw amino-acid sequence, 1210 residues long: Adenine-specific methyltransferase PglX (1210 aa).

Positions Lys1181 to Gly1194 are enriched in basic and acidic residues. The segment at Lys1181–Gln1210 is disordered. Positions Thr1201–Gln1210 are enriched in basic residues.

This sequence belongs to the methyltransferase superfamily. PglX adenine methyltransferase family.

The enzyme catalyses a 2'-deoxyadenosine in DNA + S-adenosyl-L-methionine = an N(6)-methyl-2'-deoxyadenosine in DNA + S-adenosyl-L-homocysteine + H(+). Its function is as follows. BREX systems (bacteriophage exclusion) provide immunity against bacteriophage. Part of a type 2 BREX system. Probably a DNA methyltransferase, it methylates phage DNA in vitro in an S-adenosyl-L-methionine-dependent manner. Previously called the phage growth limitation (Pgl) system, it confers protection against bacteriophage phiC31. The bacteria allows one cycle of phage infection, but subsequent cycles are impaired, protecting the original bacterial colony. The system undergoes high rates (10(-3) to 10(-4)) of phase reversion, i.e. loss and regain of phiC31 resistance. When the pglW-pglX-pglY-pglZ genes are transformed into a susceptible S.lividans (strain 1326) they confer resistance to infection by phage phiC31 and phiBT1; all 4 genes are necessary. Probably a toxic component of a type II toxin-antitoxin (TA) system. The toxic activity is inhibited by its cognate antitoxin PglZ. In terms of biological role, may be a subtypes G and alpha restriction enzyme that recognizes and cleaves an unknown sequence. Methylates an adenine residue in the same sequence. This is Adenine-specific methyltransferase PglX from Streptomyces coelicolor (strain ATCC BAA-471 / A3(2) / M145).